The following is a 444-amino-acid chain: Argininosuccinate synthase (444 aa).

Residues 18-26 (AFSGGLDTS) and A44 each bind ATP. L-citrulline is bound at residue Y100. 2 residues coordinate ATP: G130 and T132. Residues T132, N136, and D137 each contribute to the L-aspartate site. Position 136 (N136) interacts with L-citrulline. D137 provides a ligand contact to ATP. L-citrulline-binding residues include R140 and S193. D195 contributes to the ATP binding site. L-citrulline contacts are provided by T202, E204, and E281.

This sequence belongs to the argininosuccinate synthase family. Type 2 subfamily. In terms of assembly, homotetramer.

The protein localises to the cytoplasm. The enzyme catalyses L-citrulline + L-aspartate + ATP = 2-(N(omega)-L-arginino)succinate + AMP + diphosphate + H(+). It participates in amino-acid biosynthesis; L-arginine biosynthesis; L-arginine from L-ornithine and carbamoyl phosphate: step 2/3. This is Argininosuccinate synthase from Haemophilus influenzae (strain PittGG).